The following is a 301-amino-acid chain: rRNA methyltransferase 1, mitochondrial (301 aa).

Residues 1 to 11 (MIRSRVNLARE) constitute a mitochondrion transit peptide. The segment at 121-141 (YNNKNGQDSPHNDLNEGKSSS) is disordered.

It belongs to the class IV-like SAM-binding methyltransferase superfamily. RNA methyltransferase TrmH family.

The protein resides in the mitochondrion. It carries out the reaction a guanosine in 21S rRNA + S-adenosyl-L-methionine = a 2'-O-methylguanosine in 21S rRNA + S-adenosyl-L-homocysteine + H(+). S-adenosyl-L-methionine-dependent 2'-O-ribose methyltransferase that catalyzes the formation of the 2'-O-methylguanosine corresponding to position 2270 in S.cerevisiae 21S mitochondrial large subunit ribosomal RNA (mtLSU rRNA), a universally conserved modification in the peptidyl transferase domain of the mtLSU rRNA. This is rRNA methyltransferase 1, mitochondrial from Schizosaccharomyces pombe (strain 972 / ATCC 24843) (Fission yeast).